A 163-amino-acid polypeptide reads, in one-letter code: Phosphopantetheine adenylyltransferase (163 aa).

Residue Thr-9 coordinates substrate. Residues Thr-9 to Phe-10 and His-17 contribute to the ATP site. 3 residues coordinate substrate: Lys-41, Leu-76, and Arg-90. Residues Gly-91–Arg-93, Glu-101, and Tyr-126–Thr-132 each bind ATP.

It belongs to the bacterial CoaD family. As to quaternary structure, homohexamer. Mg(2+) serves as cofactor.

The protein resides in the cytoplasm. The catalysed reaction is (R)-4'-phosphopantetheine + ATP + H(+) = 3'-dephospho-CoA + diphosphate. The protein operates within cofactor biosynthesis; coenzyme A biosynthesis; CoA from (R)-pantothenate: step 4/5. In terms of biological role, reversibly transfers an adenylyl group from ATP to 4'-phosphopantetheine, yielding dephospho-CoA (dPCoA) and pyrophosphate. The sequence is that of Phosphopantetheine adenylyltransferase from Dichelobacter nodosus (strain VCS1703A).